A 501-amino-acid chain; its full sequence is MTQINNRSVWFVIGTQHLYGVETLRQVERHGQQVVDSLNRSGILPFRLQIRPLVKTPDEALALCREANYDSECYGIMTWLHTFSPAKMWIGGLSVLHKPLLQFHTQFNAEIPWDSMDMDFMNLNQTAHGGREFGFIGARMRLPHQVVTGHWQDERTLLRIGQWMRTAAALQAGRQLKVARFGDNMREVAVTEGDKVAAQIQFGYSVNGWGVGDLVEVINQVKDGDVNALVDEYESRYVFSAAAAVGGAKRQNVLDAARIELGIGRFLDDEGCRAFTTNFQTLHGMTQLPGLAVQRLMQQGYGFAGEGDWKTAALLHICKVMAGDLTGGTSFMEDYTYHFAPDNDLVLGSHMLEVCPSIASEARPLLDVQPLGIGGKADPARLIFAAKAGRAVNASVIDMGDRFRLLVNVLDAVEPPRALPKLPVARALWHAQPSLATASEAWILGGGAHHTVFSQALTVDDLRLYGEMLGIEVVVIDEQTTLHGLRDALRWNEAYYRLNQR.

Positions 306, 333, 350, and 450 each coordinate Mn(2+).

It belongs to the arabinose isomerase family. In terms of assembly, homohexamer. Mn(2+) serves as cofactor.

It carries out the reaction beta-L-arabinopyranose = L-ribulose. Its pathway is carbohydrate degradation; L-arabinose degradation via L-ribulose; D-xylulose 5-phosphate from L-arabinose (bacterial route): step 1/3. Its function is as follows. Catalyzes the conversion of L-arabinose to L-ribulose. The polypeptide is L-arabinose isomerase (Erwinia tasmaniensis (strain DSM 17950 / CFBP 7177 / CIP 109463 / NCPPB 4357 / Et1/99)).